Reading from the N-terminus, the 168-residue chain is Peptide deformylase (168 aa).

The Fe cation site is built by Cys-92 and His-134. The active site involves Glu-135. His-138 is a Fe cation binding site.

It belongs to the polypeptide deformylase family. Fe(2+) is required as a cofactor.

It catalyses the reaction N-terminal N-formyl-L-methionyl-[peptide] + H2O = N-terminal L-methionyl-[peptide] + formate. In terms of biological role, removes the formyl group from the N-terminal Met of newly synthesized proteins. Requires at least a dipeptide for an efficient rate of reaction. N-terminal L-methionine is a prerequisite for activity but the enzyme has broad specificity at other positions. The sequence is that of Peptide deformylase from Pseudomonas aeruginosa (strain ATCC 15692 / DSM 22644 / CIP 104116 / JCM 14847 / LMG 12228 / 1C / PRS 101 / PAO1).